A 272-amino-acid chain; its full sequence is Serine/arginine-rich splicing factor 5 (272 aa).

Residues 4-74 form the RRM 1 domain; the sequence is CRVFIGRLNP…ERVTIEHARA (71 aa). A disordered region spans residues 73–105; the sequence is RARSRGGRGRGRYSDRFSSRRPRNDRRNAPPVR. Basic residues predominate over residues 74-83; sequence ARSRGGRGRG. Phosphoserine is present on S86. In terms of domain architecture, RRM 2 spans 108 to 181; sequence NRLIVENLSS…RKIKLIEGSK (74 aa). K167 bears the N6-acetyllysine mark. A disordered region spans residues 174 to 272; the sequence is IKLIEGSKRH…SRSRSVDSGN (99 aa). Positions 182-229 are enriched in basic residues; it reads RHSRSRSRSRSRTRSSSRSRSRSRSRSRKSYSRSRSRSRSRSRSKSRS. A phosphoserine mark is found at S227, S229, S233, S250, and S253. A compositionally biased stretch (low complexity) spans 242-254; the sequence is RGSSSRSKSPASV.

Belongs to the splicing factor SR family. In terms of assembly, interacts (via RS domain) with PHF5A (via N-terminus). Found in a pre-mRNA splicing complex with SRSF4/SFRS4, SRSF5/SFRS5, SNRNP70, SNRPA1, SRRM1 and SRRM2. Post-translationally, extensively phosphorylated on serine residues in the RS domain.

The protein resides in the nucleus. Functionally, plays a role in constitutive splicing and can modulate the selection of alternative splice sites. This chain is Serine/arginine-rich splicing factor 5 (SRSF5), found in Homo sapiens (Human).